The sequence spans 282 residues: Shikimate dehydrogenase (NADP(+)) (282 aa).

Shikimate is bound by residues 16-18 and T63; that span reads SLS. Residue K67 is the Proton acceptor of the active site. Shikimate contacts are provided by N88 and D103. NADP(+)-binding positions include 128–132 and G243; that span reads GAGGA.

Belongs to the shikimate dehydrogenase family. In terms of assembly, homodimer.

The catalysed reaction is shikimate + NADP(+) = 3-dehydroshikimate + NADPH + H(+). It functions in the pathway metabolic intermediate biosynthesis; chorismate biosynthesis; chorismate from D-erythrose 4-phosphate and phosphoenolpyruvate: step 4/7. In terms of biological role, involved in the biosynthesis of the chorismate, which leads to the biosynthesis of aromatic amino acids. Catalyzes the reversible NADPH linked reduction of 3-dehydroshikimate (DHSA) to yield shikimate (SA). The polypeptide is Shikimate dehydrogenase (NADP(+)) (Xylella fastidiosa (strain Temecula1 / ATCC 700964)).